Reading from the N-terminus, the 180-residue chain is Large ribosomal subunit protein uL6c (180 aa).

This sequence belongs to the universal ribosomal protein uL6 family. As to quaternary structure, part of the 50S ribosomal subunit.

It localises to the plastid. Its subcellular location is the chloroplast. Its function is as follows. Binds 23S rRNA. This is Large ribosomal subunit protein uL6c (rpl6) from Pyropia yezoensis (Susabi-nori).